We begin with the raw amino-acid sequence, 523 residues long: Bifunctional purine biosynthesis protein PurH (523 aa).

Positions D4–T152 constitute an MGS-like domain.

This sequence belongs to the PurH family.

The catalysed reaction is (6R)-10-formyltetrahydrofolate + 5-amino-1-(5-phospho-beta-D-ribosyl)imidazole-4-carboxamide = 5-formamido-1-(5-phospho-D-ribosyl)imidazole-4-carboxamide + (6S)-5,6,7,8-tetrahydrofolate. The enzyme catalyses IMP + H2O = 5-formamido-1-(5-phospho-D-ribosyl)imidazole-4-carboxamide. Its pathway is purine metabolism; IMP biosynthesis via de novo pathway; 5-formamido-1-(5-phospho-D-ribosyl)imidazole-4-carboxamide from 5-amino-1-(5-phospho-D-ribosyl)imidazole-4-carboxamide (10-formyl THF route): step 1/1. It participates in purine metabolism; IMP biosynthesis via de novo pathway; IMP from 5-formamido-1-(5-phospho-D-ribosyl)imidazole-4-carboxamide: step 1/1. This Mycobacterium ulcerans (strain Agy99) protein is Bifunctional purine biosynthesis protein PurH.